Reading from the N-terminus, the 274-residue chain is Large ribosomal subunit protein uL2 (274 aa).

A disordered region spans residues Gly222–Lys257.

This sequence belongs to the universal ribosomal protein uL2 family. In terms of assembly, part of the 50S ribosomal subunit. Forms a bridge to the 30S subunit in the 70S ribosome.

In terms of biological role, one of the primary rRNA binding proteins. Required for association of the 30S and 50S subunits to form the 70S ribosome, for tRNA binding and peptide bond formation. It has been suggested to have peptidyltransferase activity; this is somewhat controversial. Makes several contacts with the 16S rRNA in the 70S ribosome. This Nitrosococcus oceani (strain ATCC 19707 / BCRC 17464 / JCM 30415 / NCIMB 11848 / C-107) protein is Large ribosomal subunit protein uL2.